The chain runs to 634 residues: Threonine--tRNA ligase (634 aa).

The 61-residue stretch at 1 to 61 folds into the TGS domain; that stretch reads MINITLPDGS…DHDASLRIIT (61 aa). The tract at residues 243–534 is catalytic; the sequence is DHRRIGKAQD…LIEHHAGAFP (292 aa). Zn(2+) contacts are provided by Cys334, His385, and His511.

It belongs to the class-II aminoacyl-tRNA synthetase family. As to quaternary structure, homodimer. It depends on Zn(2+) as a cofactor.

Its subcellular location is the cytoplasm. The enzyme catalyses tRNA(Thr) + L-threonine + ATP = L-threonyl-tRNA(Thr) + AMP + diphosphate + H(+). Catalyzes the attachment of threonine to tRNA(Thr) in a two-step reaction: L-threonine is first activated by ATP to form Thr-AMP and then transferred to the acceptor end of tRNA(Thr). Also edits incorrectly charged L-seryl-tRNA(Thr). This chain is Threonine--tRNA ligase, found in Xanthomonas euvesicatoria pv. vesicatoria (strain 85-10) (Xanthomonas campestris pv. vesicatoria).